The primary structure comprises 367 residues: tRNA-specific 2-thiouridylase MnmA (367 aa).

Residues 10 to 17 (AMSGGVDS) and M36 contribute to the ATP site. C106 (nucleophile) is an active-site residue. An intrachain disulfide couples C106 to C204. G130 is a binding site for ATP. Residues 154 to 156 (KDQ) form an interaction with tRNA region. The active-site Cysteine persulfide intermediate is the C204. The segment at 310–311 (RY) is interaction with tRNA.

It belongs to the MnmA/TRMU family.

Its subcellular location is the cytoplasm. It carries out the reaction S-sulfanyl-L-cysteinyl-[protein] + uridine(34) in tRNA + AH2 + ATP = 2-thiouridine(34) in tRNA + L-cysteinyl-[protein] + A + AMP + diphosphate + H(+). Functionally, catalyzes the 2-thiolation of uridine at the wobble position (U34) of tRNA, leading to the formation of s(2)U34. This is tRNA-specific 2-thiouridylase MnmA from Desulforamulus reducens (strain ATCC BAA-1160 / DSM 100696 / MI-1) (Desulfotomaculum reducens).